A 398-amino-acid chain; its full sequence is MNKESTDLYEILGLTPSASEEDIKKAYRKLAIKYHPDKNKGNPEAEEMFKKINHANSILSNSEKRRVYDQYGEEAVNNGLNEDSFDPMSMFMRMHQPGNKKLRAQMRHQISLQDYFTKKTVKVTITVDSKCDDCDATGFSDKQKHVCKVCRGKGIVVNEIRNGPFIQQIQQHCHGCQGKKYDTTAKDLHCPSCKGAGINKSEEETEVNVPFDILRNPKVILEGKGPWVDGKNIDLEIVFILAFSDGFELTDNHKLIYTMEINFPETLCGFRRIIDHPSGDSLLIVANPGFVINPHYIYLLERKGLNNDTLYLKFKINYSKLIHIPKKKVFNFENLEIALGTRYVPDVSDDIGTEPENVFNLSTLRQINTDPSDESQDRDSEESYGGHGRPEGVGCAQQ.

A J domain is found at Asp7–Gly72. A CR-type zinc finger spans residues Lys118–Glu202. 4 CXXCXGXG motif repeats span residues Cys131–Gly138, Cys147–Gly154, Cys173–Lys180, and Cys190–Gly197. The interval Leu364 to Gln398 is disordered. Over residues Pro371–Glu382 the composition is skewed to acidic residues.

Zn(2+) is required as a cofactor.

The polypeptide is DnaJ-like protein R260 (Acanthamoeba polyphaga mimivirus (APMV)).